Here is a 127-residue protein sequence, read N- to C-terminus: Large ribosomal subunit protein bL17 (127 aa).

This sequence belongs to the bacterial ribosomal protein bL17 family. As to quaternary structure, part of the 50S ribosomal subunit. Contacts protein L32.

The polypeptide is Large ribosomal subunit protein bL17 (Ligilactobacillus salivarius (strain UCC118) (Lactobacillus salivarius)).